The sequence spans 524 residues: Importin subunit alpha-1 (524 aa).

A disordered region spans residues 1 to 42 (MGDEFRPSHEERSKMYKSNVRDQNEMRRKRREDEVQIRKNRR). The 59-residue stretch at 1 to 59 (MGDEFRPSHEERSKMYKSNVRDQNEMRRKRREDEVQIRKNRRDEKFERNRQITVQRSLS) folds into the IBB domain.

It belongs to the importin alpha family. In terms of assembly, forms a complex with an importin beta subunit. In terms of tissue distribution, adult germline tissues.

The protein resides in the cytoplasm. Functionally, binds specifically and directly to substrates containing either a simple or bipartite NLS motif. Promotes docking of import substrates to the nuclear envelope. Seems to act as a cytosolic receptor for both simple and bipartite NLS motifs. The sequence is that of Importin subunit alpha-1 (ima-1) from Caenorhabditis elegans.